The following is a 315-amino-acid chain: Homoserine kinase (315 aa).

Position 91–101 (91–101 (PIGSGLGSSAS)) interacts with ATP.

Belongs to the GHMP kinase family. Homoserine kinase subfamily.

Its subcellular location is the cytoplasm. The enzyme catalyses L-homoserine + ATP = O-phospho-L-homoserine + ADP + H(+). The protein operates within amino-acid biosynthesis; L-threonine biosynthesis; L-threonine from L-aspartate: step 4/5. Functionally, catalyzes the ATP-dependent phosphorylation of L-homoserine to L-homoserine phosphate. The protein is Homoserine kinase of Buchnera aphidicola subsp. Cinara cedri (strain Cc).